Consider the following 357-residue polypeptide: Cyclin-Y (357 aa).

The segment covering 1–13 (MGNSSCCLRTRSS) has biased composition (polar residues). Residues 1 to 23 (MGNSSCCLRTRSSSGEDKSYNND) form a disordered region. The region spanning 186-284 (PDHRNIYRFV…RFLECLDFNI (99 aa)) is the Cyclin N-terminal domain.

Belongs to the cyclin family. As to quaternary structure, interacts with pct-1; the interaction is required to activate pct-1.

The protein resides in the cytoplasm. Its subcellular location is the cell projection. It is found in the dendrite. It localises to the axon. Functionally, in association with pct-1, regulates the trafficking of synaptic vesicle precursors in DA motor neurons by promoting anterograde trafficking to the axon and preventing dynein-dependent trafficking to the dendrite. May also regulate synaptic vesicle trafficking in DD motor neurons and in RIA interneurons. Involved in synapse formation during DD motor neuron remodeling by disassembling ventral presynaptic structures. May activate cdk-5. This Caenorhabditis elegans protein is Cyclin-Y.